The chain runs to 434 residues: MSTASTTHTQTDALQSDDLAAQCVDIARRAKAASRLLGTLDTNIKDQWLIESADALIEASDAIIAANQLDLENAPKYGLTDAGIDRLRLDEARIAGIATGLREIASLNDPIGEVLDGFARPGGMRIEKRRVPLGVVFFIYESRPNVTADAAGICVKSGNAVILRGGKEAAHSSRAIIEVLHEVGRRVGIPDDAVQLVGTTDRAAVGHFLKQSDNIDVTIPRGGENLIRRVAAEATMPVIKHYDGNCHVYVDESADIEMAVDIIENAKCQRMGVCNACESLLIHQSIAADALPAIAKRLASRGVEMRVDERASAYVPDGVPATDADFAAEFLGPQISIAVVDSLAAATDHINHYGSGHTDAIVTSNIAASEQFTALVDSSAVMVNASTRFNDGGMFGLGAEIGISTDKFHARGPCGLRELTSYKYIVRGNGHIRG.

The protein belongs to the gamma-glutamyl phosphate reductase family.

It is found in the cytoplasm. It carries out the reaction L-glutamate 5-semialdehyde + phosphate + NADP(+) = L-glutamyl 5-phosphate + NADPH + H(+). Its pathway is amino-acid biosynthesis; L-proline biosynthesis; L-glutamate 5-semialdehyde from L-glutamate: step 2/2. Catalyzes the NADPH-dependent reduction of L-glutamate 5-phosphate into L-glutamate 5-semialdehyde and phosphate. The product spontaneously undergoes cyclization to form 1-pyrroline-5-carboxylate. This Rhodopirellula baltica (strain DSM 10527 / NCIMB 13988 / SH1) protein is Gamma-glutamyl phosphate reductase.